Reading from the N-terminus, the 247-residue chain is MyoD family inhibitor domain-containing protein (247 aa).

Disordered stretches follow at residues 1–67 (MSCA…NPSA) and 80–110 (QLQT…GNGI). One can recognise an MDFI domain in the interval 74–247 (QPERLPQLQT…MECCGICFPS (174 aa)). Phosphoserine occurs at positions 129 and 141.

Belongs to the MDFI family. Interacts with HAND1; the interaction sequesters Hand1 into the nucleolus and inhibits its activity. Interacts (via C-terminus) with ZIC2. Interacts (via C-terminus) with AXIN1, the histidine-rich region of CCNT1/cyclin-T and weakly with LEF1. Interacts with CCNT2. Interacts with GATA2. Interacts (via C-terminus) with Piezo channel composed of PIEZO1 or PIEZO2; the interaction prolongs Piezo channel inactivation. Palmitoylated. In terms of tissue distribution, in the embryo, robust expression is detected between 16.5 and 18.5 dpc in lung, kidney, and salivary glands. In the developing cardiovascular system, it is detected in lymphatic and cardiac valves (at protein level).

Its subcellular location is the cytoplasm. It is found in the secreted. In terms of biological role, required to control the activity of various transcription factors through their sequestration in the cytoplasm. Retains nuclear Zic proteins ZIC1, ZIC2 and ZIC3 in the cytoplasm and inhibits their transcriptional activation. Modulates the expression from cellular promoters. Binds to the axin complex, resulting in an increase in the level of free beta-catenin. Affects axin-regulation of the WNT and JNK signaling pathways. Involved in the development of lymphatic vessel valves. Required to promote lymphatic endothelial cell migration, in a process that involves down-regulation of integrin beta 1 activation and control of cell adhesion to the extracellular matrix. Regulates the activity of mechanosensitive Piezo channel. The chain is MyoD family inhibitor domain-containing protein from Mus musculus (Mouse).